Reading from the N-terminus, the 437-residue chain is Coiled-coil domain-containing protein 78 (437 aa).

Coiled coils occupy residues 83-114 (HLRE…LHGN), 147-287 (EELK…QRQE), and 360-408 (QRLQ…YKQE).

Belongs to the CCDC78 family.

It localises to the cytoplasm. Its subcellular location is the cytoskeleton. The protein localises to the microtubule organizing center. The protein resides in the centrosome. It is found in the centriole. It localises to the perinuclear region. Its subcellular location is the cell membrane. The protein localises to the sarcolemma. The protein resides in the sarcoplasmic reticulum. Functionally, component of the deuterosome, a structure that promotes de novo centriole amplification in multiciliated cells that can generate more than 100 centrioles. Deuterosome-mediated centriole amplification occurs in terminally differentiated multiciliated cells (G1/0) and not in S phase. Essential for centriole amplification and is required for CEP152 localization to the deuterosome. This Mus musculus (Mouse) protein is Coiled-coil domain-containing protein 78 (Ccdc78).